We begin with the raw amino-acid sequence, 246 residues long: ATP synthase subunit b 1 (246 aa).

The helical transmembrane segment at 5–27 threads the bilayer; that stretch reads WFTFTAQVINFLVLVGLLRYFLY.

Belongs to the ATPase B chain family. As to quaternary structure, F-type ATPases have 2 components, F(1) - the catalytic core - and F(0) - the membrane proton channel. F(1) has five subunits: alpha(3), beta(3), gamma(1), delta(1), epsilon(1). F(0) has three main subunits: a(1), b(2) and c(10-14). The alpha and beta chains form an alternating ring which encloses part of the gamma chain. F(1) is attached to F(0) by a central stalk formed by the gamma and epsilon chains, while a peripheral stalk is formed by the delta and b chains.

Its subcellular location is the cell inner membrane. F(1)F(0) ATP synthase produces ATP from ADP in the presence of a proton or sodium gradient. F-type ATPases consist of two structural domains, F(1) containing the extramembraneous catalytic core and F(0) containing the membrane proton channel, linked together by a central stalk and a peripheral stalk. During catalysis, ATP synthesis in the catalytic domain of F(1) is coupled via a rotary mechanism of the central stalk subunits to proton translocation. In terms of biological role, component of the F(0) channel, it forms part of the peripheral stalk, linking F(1) to F(0). In Rhodopirellula baltica (strain DSM 10527 / NCIMB 13988 / SH1), this protein is ATP synthase subunit b 1.